A 192-amino-acid polypeptide reads, in one-letter code: Na(+)-translocating ferredoxin:NAD(+) oxidoreductase complex subunit A (192 aa).

Helical transmembrane passes span 4 to 24, 38 to 58, 71 to 91, 101 to 121, 133 to 153, and 169 to 189; these read IFIMISAIFVNNFVLSRFLGI, VGMGVAVTFVMALASAITYVV, LQTIAFILIIAALVQLVEMII, ALGVYLPLITTNCAVLGVALI, IFNGVGAALGFTLAIVLFAGI, and FPIALLTAGLMAIAFLGFSGM.

It belongs to the NqrDE/RnfAE family. The complex is composed of six subunits: RnfA, RnfB, RnfC, RnfD, RnfE and RnfG.

It localises to the cell membrane. It carries out the reaction 2 reduced [2Fe-2S]-[ferredoxin] + Na(+)(in) + NAD(+) + H(+) = 2 oxidized [2Fe-2S]-[ferredoxin] + Na(+)(out) + NADH. In terms of biological role, part of a membrane-bound complex that couples electron transfer with translocation of ions across the membrane. Couples electron transfer from reduced ferredoxin to NAD(+) with electrogenic movement of Na(+) out of the cell. Involved in caffeate respiration. The protein is Na(+)-translocating ferredoxin:NAD(+) oxidoreductase complex subunit A of Acetobacterium woodii (strain ATCC 29683 / DSM 1030 / JCM 2381 / KCTC 1655 / WB1).